The chain runs to 98 residues: Cell cycle protein GpsB (98 aa).

The stretch at 34–72 forms a coiled coil; it reads LDMVIKDYEAFHQEIEELQQENLQLKKQLEEANKRQPAQ.

The protein belongs to the GpsB family. Forms polymers through the coiled coil domains. Interacts with PBP1, MreC and EzrA.

It localises to the cytoplasm. Divisome component that associates with the complex late in its assembly, after the Z-ring is formed, and is dependent on DivIC and PBP2B for its recruitment to the divisome. Together with EzrA, is a key component of the system that regulates PBP1 localization during cell cycle progression. Its main role could be the removal of PBP1 from the cell pole after pole maturation is completed. Also contributes to the recruitment of PBP1 to the division complex. Not essential for septum formation. This chain is Cell cycle protein GpsB, found in Bacillus licheniformis (strain ATCC 14580 / DSM 13 / JCM 2505 / CCUG 7422 / NBRC 12200 / NCIMB 9375 / NCTC 10341 / NRRL NRS-1264 / Gibson 46).